A 204-amino-acid chain; its full sequence is Redox-sensing transcriptional repressor Rex 2 (204 aa).

Residues 17–53 (MYRKVLEATKKPYISSDEIARFLEINPDLVRKDFSYL) constitute a DNA-binding region (H-T-H motif).

Belongs to the transcriptional regulatory Rex family. In terms of assembly, homodimer.

The protein resides in the cytoplasm. In terms of biological role, modulates transcription in response to changes in cellular NADH/NAD(+) redox state. The protein is Redox-sensing transcriptional repressor Rex 2 (rex2) of Thermotoga maritima (strain ATCC 43589 / DSM 3109 / JCM 10099 / NBRC 100826 / MSB8).